The following is a 278-amino-acid chain: Imidazole glycerol phosphate synthase subunit HisF (278 aa).

Catalysis depends on residues aspartate 11 and aspartate 130.

This sequence belongs to the HisA/HisF family. In terms of assembly, heterodimer of HisH and HisF.

The protein resides in the cytoplasm. The enzyme catalyses 5-[(5-phospho-1-deoxy-D-ribulos-1-ylimino)methylamino]-1-(5-phospho-beta-D-ribosyl)imidazole-4-carboxamide + L-glutamine = D-erythro-1-(imidazol-4-yl)glycerol 3-phosphate + 5-amino-1-(5-phospho-beta-D-ribosyl)imidazole-4-carboxamide + L-glutamate + H(+). It participates in amino-acid biosynthesis; L-histidine biosynthesis; L-histidine from 5-phospho-alpha-D-ribose 1-diphosphate: step 5/9. Its function is as follows. IGPS catalyzes the conversion of PRFAR and glutamine to IGP, AICAR and glutamate. The HisF subunit catalyzes the cyclization activity that produces IGP and AICAR from PRFAR using the ammonia provided by the HisH subunit. The sequence is that of Imidazole glycerol phosphate synthase subunit HisF from Thermodesulfovibrio yellowstonii (strain ATCC 51303 / DSM 11347 / YP87).